An 827-amino-acid chain; its full sequence is Translation initiation factor IF-2 (827 aa).

Residues 49 to 205 are disordered; sequence ALNREKEEKE…GAPDKKREWE (157 aa). Basic and acidic residues-rich tracts occupy residues 50–73, 96–106, 116–129, 137–150, 157–168, and 182–205; these read LNRE…KAEA, RPREQRSDRPQ, PEPR…RPGE, RPRD…KERG, FGEKKERPPFPR, and EAPK…REWE. The region spanning 326-495 is the tr-type G domain; that stretch reads PRPPIVTVMG…LLVADLKELK (170 aa). A G1 region spans residues 335-342; the sequence is GHVDHGKT. 335-342 is a GTP binding site; that stretch reads GHVDHGKT. The segment at 360-364 is G2; sequence GITQH. A G3 region spans residues 381–384; that stretch reads DTPG. GTP contacts are provided by residues 381–385 and 435–438; these read DTPGH and NKID. The G4 stretch occupies residues 435–438; the sequence is NKID. The G5 stretch occupies residues 471 to 473; sequence SAL.

This sequence belongs to the TRAFAC class translation factor GTPase superfamily. Classic translation factor GTPase family. IF-2 subfamily.

Its subcellular location is the cytoplasm. In terms of biological role, one of the essential components for the initiation of protein synthesis. Protects formylmethionyl-tRNA from spontaneous hydrolysis and promotes its binding to the 30S ribosomal subunits. Also involved in the hydrolysis of GTP during the formation of the 70S ribosomal complex. The sequence is that of Translation initiation factor IF-2 from Carboxydothermus hydrogenoformans (strain ATCC BAA-161 / DSM 6008 / Z-2901).